Here is a 441-residue protein sequence, read N- to C-terminus: Vacuolar cation/proton exchanger 2 (441 aa).

At 1–69 the chain is on the cytoplasmic side; that stretch reads MSCCKVPVLI…PKNSVLNSIK (69 aa). A helical transmembrane segment spans residues 70–90; the sequence is IVIFCNKLNLLLPFGPLAILV. Over 91 to 97 the chain is Extracellular; the sequence is HYMIDSK. Residues 98-118 form a helical membrane-spanning segment; that stretch reads GWVFLLTLVGITPLAERLGYA. Over 119–129 the chain is Cytoplasmic; the sequence is TEQLACYTGPT. The helical transmembrane segment at 130 to 150 threads the bilayer; it reads VGGLLNATFGNVTELIISIFA. A cation selection region spans residues 139–174; sequence GNVTELIISIFALKNGMIRVVQLTLLGSILSNMLLV. Residues 151 to 166 are Extracellular-facing; that stretch reads LKNGMIRVVQLTLLGS. A helical membrane pass occupies residues 167 to 187; the sequence is ILSNMLLVLGCAFFCGGLVFY. The Cytoplasmic segment spans residues 188–196; the sequence is QKDQVFDKG. Residues 197-217 form a helical membrane-spanning segment; it reads IATVNSGLLLMAVMGILFPAV. Topologically, residues 218–231 are extracellular; sequence LHYTHSEVHAGSSE. A helical membrane pass occupies residues 232–252; it reads LALSRFSSCIMLIAYAAYLFF. At 253–286 the chain is on the cytoplasmic side; the sequence is QLKSQSNSYSPLDEESNQNEETSAEDEDPEISKW. The helical transmembrane segment at 287 to 307 threads the bilayer; it reads EAIIWLSILTAWVSLLSGYLV. The Extracellular segment spans residues 308 to 311; the sequence is DAIE. A helical transmembrane segment spans residues 312–332; sequence GASVSWNIPIAFISTILLPIV. The Cytoplasmic portion of the chain corresponds to 333 to 354; that stretch reads GNAAEHAGAIMFAMKDKLDLSL. Residues 333–368 are cation selection; the sequence is GNAAEHAGAIMFAMKDKLDLSLGVAIGSSIQISMFA. A helical membrane pass occupies residues 355-375; sequence GVAIGSSIQISMFAVPFCVVI. At 376–384 the chain is on the extracellular side; the sequence is GWMMGQQMD. Residues 385-405 traverse the membrane as a helical segment; sequence LNFQLFETAMLFITVIVVAFF. Residues 406–412 lie on the Cytoplasmic side of the membrane; that stretch reads LQEGSSN. A helical membrane pass occupies residues 413-433; that stretch reads YFKGLMLILCYLIVAASFFVH. Residues 434–441 lie on the Extracellular side of the membrane; sequence EDPHQDGI.

It belongs to the Ca(2+):cation antiporter (CaCA) (TC 2.A.19) family. Cation/proton exchanger (CAX) subfamily.

Its subcellular location is the vacuole membrane. Inhibited by excess of Ca(2+) and Cd(2+), Mn(2+), and Zn(2+). Its function is as follows. Vacuolar cation/proton exchanger (CAX). Translocates Ca(2+) and other metal ions into vacuoles using the proton gradient formed by H(+)-ATPase and H(+)-pyrophosphatase. The protein is Vacuolar cation/proton exchanger 2 (CAX2) of Arabidopsis thaliana (Mouse-ear cress).